The sequence spans 822 residues: Valine--tRNA ligase (822 aa).

Positions 41–51 (PNVTGQLHLGH) match the 'HIGH' region motif. Positions 511–515 (KMSKS) match the 'KMSKS' region motif. Lys-514 lines the ATP pocket. Residues 765-822 (EQKGRELKEIQFLKSEILRAEKILTNKGFLEKAPREKIDLERTKLEKLKEKLVFYEKK) adopt a coiled-coil conformation.

Belongs to the class-I aminoacyl-tRNA synthetase family. ValS type 1 subfamily. In terms of assembly, monomer.

The protein resides in the cytoplasm. It carries out the reaction tRNA(Val) + L-valine + ATP = L-valyl-tRNA(Val) + AMP + diphosphate. Catalyzes the attachment of valine to tRNA(Val). As ValRS can inadvertently accommodate and process structurally similar amino acids such as threonine, to avoid such errors, it has a 'posttransfer' editing activity that hydrolyzes mischarged Thr-tRNA(Val) in a tRNA-dependent manner. The chain is Valine--tRNA ligase from Mesomycoplasma hyopneumoniae (strain J / ATCC 25934 / NCTC 10110) (Mycoplasma hyopneumoniae).